A 287-amino-acid polypeptide reads, in one-letter code: POU domain class 2-associating factor 2 (287 aa).

The OCA domain occupies 10–32 (KRVYQGVRVKHTVKDLLAEKRSR). Disordered regions lie at residues 24 to 51 (DLLA…PPFI), 161 to 199 (TVPD…TQHR), and 247 to 279 (PKVG…MAWG). Composition is skewed to polar residues over residues 33–49 (QTSN…SQPP) and 180–199 (LPPS…TQHR).

It belongs to the POU2AF family. Interacts with POU2F3 (via the POU domain) in a DNA-dependent manner; this interaction recruits POU2AF2 to chromatin and increases POU2F3 transactivation activity. Expressed in tuft cells of the small intestine, trachea, thymus, and colon.

It localises to the cytoplasm. The protein resides in the cytosol. It is found in the nucleus. Its function is as follows. Transcriptional coactivator of POU2F3. This complex drives the development of tuft cells, a rare chemosensory cells that coordinate immune and neural functions within mucosal epithelial tissues. The polypeptide is POU domain class 2-associating factor 2 (Mus musculus (Mouse)).